A 331-amino-acid chain; its full sequence is Osmotic avoidance abnormal protein 8 (331 aa).

The first 21 residues, 1–21, serve as a signal peptide directing secretion; the sequence is MPAKMLKWLLIHIFLIHSIFC.

In terms of tissue distribution, expressed in the hypodermal syncitium but not in hypodermal seam cells.

It is found in the secreted. Negative regulator of the osmotic stress response. Acts via the transmembrane protein ptr-23. This chain is Osmotic avoidance abnormal protein 8 (osm-8), found in Caenorhabditis elegans.